Here is a 298-residue protein sequence, read N- to C-terminus: ATP synthase gamma chain (298 aa).

The protein belongs to the ATPase gamma chain family. F-type ATPases have 2 components, CF(1) - the catalytic core - and CF(0) - the membrane proton channel. CF(1) has five subunits: alpha(3), beta(3), gamma(1), delta(1), epsilon(1). CF(0) has three main subunits: a, b and c.

The protein localises to the cell inner membrane. Produces ATP from ADP in the presence of a proton gradient across the membrane. The gamma chain is believed to be important in regulating ATPase activity and the flow of protons through the CF(0) complex. The chain is ATP synthase gamma chain from Francisella tularensis subsp. mediasiatica (strain FSC147).